Consider the following 333-residue polypeptide: UPF0285 protein MTH_1441 (333 aa).

It belongs to the UPF0285 family.

The protein is UPF0285 protein MTH_1441 of Methanothermobacter thermautotrophicus (strain ATCC 29096 / DSM 1053 / JCM 10044 / NBRC 100330 / Delta H) (Methanobacterium thermoautotrophicum).